The primary structure comprises 484 residues: Mitochondrial metal transporter 2 (484 aa).

The transit peptide at Met-1 to Asn-56 directs the protein to the mitochondrion. Over residues Ser-73 to Gln-82 the composition is skewed to polar residues. Positions Ser-73–Asn-114 are disordered. The segment covering Asn-83–Lys-92 has biased composition (basic and acidic residues). A run of 5 helical transmembrane segments spans residues Ile-132 to Ile-152, Ala-158 to Phe-178, Ile-209 to Val-229, Ala-256 to Phe-276, and Tyr-316 to Ile-336. Residues Asp-453–His-484 form a disordered region.

Belongs to the cation diffusion facilitator (CDF) transporter (TC 2.A.4) family. SLC30A subfamily.

The protein localises to the mitochondrion membrane. Mitochondrial metal transporter involved in mitochondrial iron accumulation. The polypeptide is Mitochondrial metal transporter 2 (MMT2) (Saccharomyces cerevisiae (strain ATCC 204508 / S288c) (Baker's yeast)).